We begin with the raw amino-acid sequence, 110 residues long: Late cornified envelope protein 2D (110 aa).

It belongs to the LCE family. Skin-specific. Expression was readily detected in adult trunk skin, adult arm skin, fetal skin, penal skin, vulva, esophagus and tongue. Not expressed in the cervix, rectum, lung, colon, or placenta.

Functionally, precursors of the cornified envelope of the stratum corneum. The polypeptide is Late cornified envelope protein 2D (LCE2D) (Homo sapiens (Human)).